A 261-amino-acid polypeptide reads, in one-letter code: Cytochrome c oxidase subunit 3 (261 aa).

The Mitochondrial matrix portion of the chain corresponds to 1–15 (MTHQTHAYHMVNPSP). The chain crosses the membrane as a helical span at residues 16–34 (WPLTGALSALLMTSGLAMW). The Mitochondrial intermembrane segment spans residues 35–40 (FHFNST). Residues 41–66 (ILLMIGLTTNTLTMYQWWRDVIREST) traverse the membrane as a helical segment. Residues 67 to 72 (FQGHHT) are Mitochondrial matrix-facing. A helical transmembrane segment spans residues 73-105 (PTVQKGLRYGMILFIISEVLFFTGFFWAFYHSS). Over 106–128 (LAPTPELGGCWPPTGIHPLNPLE) the chain is Mitochondrial intermembrane. The chain crosses the membrane as a helical span at residues 129–152 (VPLLNTSVLLASGVSITWAHHSLM). Over 153-155 (EGN) the chain is Mitochondrial matrix. The chain crosses the membrane as a helical span at residues 156 to 183 (RYPMLQALFITIALGVYFTLLQASEYYE). Topologically, residues 184–190 (APFTISD) are mitochondrial intermembrane. Residues 191–223 (GVYGSTFFVATGFHGLHVIIGSTFLIVCFFRQL) traverse the membrane as a helical segment. Topologically, residues 224–232 (KFHFTSNHH) are mitochondrial matrix. A helical membrane pass occupies residues 233–256 (FGFEAAAWYWHFVDVVWLFLYVSI). Topologically, residues 257-261 (YWWGS) are mitochondrial intermembrane.

Belongs to the cytochrome c oxidase subunit 3 family. In terms of assembly, component of the cytochrome c oxidase (complex IV, CIV), a multisubunit enzyme composed of 14 subunits. The complex is composed of a catalytic core of 3 subunits MT-CO1, MT-CO2 and MT-CO3, encoded in the mitochondrial DNA, and 11 supernumerary subunits COX4I, COX5A, COX5B, COX6A, COX6B, COX6C, COX7A, COX7B, COX7C, COX8 and NDUFA4, which are encoded in the nuclear genome. The complex exists as a monomer or a dimer and forms supercomplexes (SCs) in the inner mitochondrial membrane with NADH-ubiquinone oxidoreductase (complex I, CI) and ubiquinol-cytochrome c oxidoreductase (cytochrome b-c1 complex, complex III, CIII), resulting in different assemblies (supercomplex SCI(1)III(2)IV(1) and megacomplex MCI(2)III(2)IV(2)).

It localises to the mitochondrion inner membrane. It catalyses the reaction 4 Fe(II)-[cytochrome c] + O2 + 8 H(+)(in) = 4 Fe(III)-[cytochrome c] + 2 H2O + 4 H(+)(out). In terms of biological role, component of the cytochrome c oxidase, the last enzyme in the mitochondrial electron transport chain which drives oxidative phosphorylation. The respiratory chain contains 3 multisubunit complexes succinate dehydrogenase (complex II, CII), ubiquinol-cytochrome c oxidoreductase (cytochrome b-c1 complex, complex III, CIII) and cytochrome c oxidase (complex IV, CIV), that cooperate to transfer electrons derived from NADH and succinate to molecular oxygen, creating an electrochemical gradient over the inner membrane that drives transmembrane transport and the ATP synthase. Cytochrome c oxidase is the component of the respiratory chain that catalyzes the reduction of oxygen to water. Electrons originating from reduced cytochrome c in the intermembrane space (IMS) are transferred via the dinuclear copper A center (CU(A)) of subunit 2 and heme A of subunit 1 to the active site in subunit 1, a binuclear center (BNC) formed by heme A3 and copper B (CU(B)). The BNC reduces molecular oxygen to 2 water molecules using 4 electrons from cytochrome c in the IMS and 4 protons from the mitochondrial matrix. In Raphicerus campestris (Steenbok), this protein is Cytochrome c oxidase subunit 3 (MT-CO3).